Here is a 2615-residue protein sequence, read N- to C-terminus: Collagen alpha-5(VI) chain (2615 aa).

Positions 1–18 (MKILLIIFVLIIWTETLA) are cleaved as a signal peptide. Residues 19–1394 (DQSPGPGPVY…TCCCTFCKCP (1376 aa)) are nonhelical region. 7 VWFA domains span residues 30 to 209 (DVVF…IKDV), 236 to 413 (DLVF…LKKL), 442 to 612 (DIHF…KNEV), 628 to 797 (DIMF…ERKL), 814 to 987 (DVVF…FTLV), 1005 to 1178 (DVIF…KKRI), and 1194 to 1376 (DIVV…KLSQ). Asn-201 and Asn-260 each carry an N-linked (GlcNAc...) asparagine glycan. Asn-835 is a glycosylation site (N-linked (GlcNAc...) asparagine). Collagen-like domains follow at residues 1395 to 1446 (GIPG…GCPG), 1434 to 1490 (GPQG…KGDP), 1464 to 1520 (GDDG…PGQN), 1524 to 1580 (KGQK…TLGA), 1579 to 1629 (GAEG…LGKK), and 1674 to 1729 (GDAG…MAGQ). Residues 1395-1728 (GIPGPHGTRG…GQRGIKGMAG (334 aa)) form a triple-helical region region. A disordered region spans residues 1404 to 1693 (GLQAMKGSQG…NPGIPGGPGP (290 aa)). The Cell attachment site motif lies at 1430 to 1432 (RGD). Positions 1511–1522 (PGDPGNPGQNNN) are enriched in low complexity. Low complexity-rich tracts occupy residues 1601 to 1611 (SQGQKGPQGSP) and 1622 to 1641 (RPGL…LGPV). The segment at 1729–2615 (QPVYSQCDLI…EDKEMEATDI (887 aa)) is nonhelical region. VWFA domains lie at 1758 to 1965 (ELVF…MDVV), 1963 to 2154 (DVVF…AKFL), and 2291 to 2487 (DVAF…VKPF). Asn-2509 carries an N-linked (GlcNAc...) asparagine glycan.

Belongs to the type VI collagen family. As to quaternary structure, trimers composed of three different chains: alpha-1(VI), alpha-2(VI), and alpha-3(VI) or alpha-5(VI) or alpha-6(VI). Prolines at the third position of the tripeptide repeating unit (G-X-Y) are hydroxylated in some or all of the chains. Expressed in skin, followed by lung, small intestine, colon and testis. In skin, it is expressed in the epidermis with strongest staining in suprabasal viable layers. In ATOD patients, it is absent in the most differentiated upper spinous and granular layers (at protein level).

It localises to the secreted. The protein resides in the extracellular space. The protein localises to the extracellular matrix. Collagen VI acts as a cell-binding protein. This is Collagen alpha-5(VI) chain (COL6A5) from Homo sapiens (Human).